The following is a 314-amino-acid chain: Acetaldehyde dehydrogenase 4 (314 aa).

15–18 (SGNI) contacts NAD(+). The active-site Acyl-thioester intermediate is the Cys-133. NAD(+) contacts are provided by residues 164 to 172 (SAGPGTRAN) and Asn-292.

This sequence belongs to the acetaldehyde dehydrogenase family.

The enzyme catalyses acetaldehyde + NAD(+) + CoA = acetyl-CoA + NADH + H(+). The sequence is that of Acetaldehyde dehydrogenase 4 from Burkholderia lata (strain ATCC 17760 / DSM 23089 / LMG 22485 / NCIMB 9086 / R18194 / 383).